We begin with the raw amino-acid sequence, 445 residues long: Serine protease inhibitor A3F (445 aa).

N-linked (GlcNAc...) asparagine glycans are attached at residues asparagine 28, asparagine 94, asparagine 174, and asparagine 259. The segment at 357–382 is RCL; that stretch reads GTEAAAGTGYQNLQCCQGVIYSMKIY.

The protein belongs to the serpin family.

This chain is Serine protease inhibitor A3F (Serpina3f), found in Mus musculus (Mouse).